The sequence spans 161 residues: Cyclic pyranopterin monophosphate synthase (161 aa).

Residues 75–77 (LCH) and 113–114 (ME) each bind substrate. D128 is a catalytic residue.

Belongs to the MoaC family. As to quaternary structure, homohexamer; trimer of dimers.

It carries out the reaction (8S)-3',8-cyclo-7,8-dihydroguanosine 5'-triphosphate = cyclic pyranopterin phosphate + diphosphate. It participates in cofactor biosynthesis; molybdopterin biosynthesis. Its function is as follows. Catalyzes the conversion of (8S)-3',8-cyclo-7,8-dihydroguanosine 5'-triphosphate to cyclic pyranopterin monophosphate (cPMP). This Salmonella typhi protein is Cyclic pyranopterin monophosphate synthase.